We begin with the raw amino-acid sequence, 303 residues long: Recombination-associated protein RdgC (303 aa).

The protein belongs to the RdgC family.

It is found in the cytoplasm. The protein resides in the nucleoid. May be involved in recombination. The protein is Recombination-associated protein RdgC of Pseudoalteromonas translucida (strain TAC 125).